Here is a 241-residue protein sequence, read N- to C-terminus: Thiamine import ATP-binding protein ThiQ (241 aa).

The ABC transporter domain maps to 2–239 (IQLDKLNHCY…PKDEVLIQYL (238 aa)). 41 to 48 (GPSGAGKS) contacts ATP.

This sequence belongs to the ABC transporter superfamily. Thiamine importer (TC 3.A.1.19.1) family. In terms of assembly, the complex is composed of two ATP-binding proteins (ThiQ), two transmembrane proteins (ThiP) and a solute-binding protein (ThiB).

It localises to the cell inner membrane. It catalyses the reaction thiamine(out) + ATP + H2O = thiamine(in) + ADP + phosphate + H(+). Its function is as follows. Part of the ABC transporter complex ThiBPQ involved in thiamine import. Responsible for energy coupling to the transport system. This chain is Thiamine import ATP-binding protein ThiQ, found in Photobacterium profundum (strain SS9).